The following is a 213-amino-acid chain: 3,4-dihydroxy-2-butanone 4-phosphate synthase (213 aa).

D-ribulose 5-phosphate-binding positions include 37 to 38 (RE), Asp-42, 150 to 154 (RSGHT), and Glu-174. Residue Glu-38 coordinates Mg(2+). A Mg(2+)-binding site is contributed by His-153.

It belongs to the DHBP synthase family. As to quaternary structure, homodimer. Requires Mg(2+) as cofactor. The cofactor is Mn(2+).

It catalyses the reaction D-ribulose 5-phosphate = (2S)-2-hydroxy-3-oxobutyl phosphate + formate + H(+). Its pathway is cofactor biosynthesis; riboflavin biosynthesis; 2-hydroxy-3-oxobutyl phosphate from D-ribulose 5-phosphate: step 1/1. Catalyzes the conversion of D-ribulose 5-phosphate to formate and 3,4-dihydroxy-2-butanone 4-phosphate. The polypeptide is 3,4-dihydroxy-2-butanone 4-phosphate synthase (Blochmanniella floridana).